Consider the following 71-residue polypeptide: Conotoxin Pl071 (71 aa).

The first 20 residues, M1–A20, serve as a signal peptide directing secretion. Residues S21–R31 constitute a propeptide that is removed on maturation. Tyrosine amide is present on Y69.

Belongs to the conotoxin NSf-1 superfamily. In terms of tissue distribution, expressed by the venom duct.

The protein resides in the secreted. In terms of biological role, probable neurotoxin with unknown target. Possibly targets ion channels. This is Conotoxin Pl071 from Conus planorbis (Planorbis cone).